A 540-amino-acid polypeptide reads, in one-letter code: Membrane protein insertase YidC (540 aa).

5 consecutive transmembrane segments (helical) span residues 1–21 (MVVQNNFLFIAFIFVTFMMLD), 351–371 (NWGISIIIITFMVRGIMFPLT), 418–438 (LGGCMPLIIQMPIFLALYYML), 464–484 (ILPIIMGITMFLIQKISPSSI), and 497–517 (PLIFTIFFLWFPSGLVLYYII).

This sequence belongs to the OXA1/ALB3/YidC family. Type 1 subfamily. As to quaternary structure, interacts with the Sec translocase complex via SecD. Specifically interacts with transmembrane segments of nascent integral membrane proteins during membrane integration.

It is found in the cell membrane. Functionally, required for the insertion and/or proper folding and/or complex formation of integral membrane proteins into the membrane. Involved in integration of membrane proteins that insert both dependently and independently of the Sec translocase complex, as well as at least some lipoproteins. Aids folding of multispanning membrane proteins. This chain is Membrane protein insertase YidC, found in Wigglesworthia glossinidia brevipalpis.